Reading from the N-terminus, the 397-residue chain is Keratinocyte differentiation factor 1 (397 aa).

Over residues 1 to 16 (MPRPGQPRPSSGPPRL) the composition is skewed to pro residues. Disordered stretches follow at residues 1–67 (MPRP…SAEP), 130–158 (EHNG…MGSS), and 192–214 (LAEP…RGSE). The span at 44–55 (RPDPKDPGHHGP) shows a compositional bias: basic and acidic residues. The span at 201–211 (SLPSTFTNSPR) shows a compositional bias: polar residues. S218 is subject to Phosphoserine. Disordered stretches follow at residues 304-339 (ISTR…TMLG) and 361-392 (ARKL…GAPL). Positions 321–330 (ARSTAPAAAP) are enriched in low complexity. A compositionally biased stretch (polar residues) spans 375–388 (SQDSSFQGTDTDSS).

Its subcellular location is the cytoplasm. It localises to the cell junction. Functionally, plays a role in the regulation of the epidermis formation during early development. Required both as an inhibitor of basal cell proliferation and a promoter of differentiation of basal progenitor cell progeny. The polypeptide is Keratinocyte differentiation factor 1 (Kdf1) (Mus musculus (Mouse)).